A 251-amino-acid chain; its full sequence is DNA polymerase sliding clamp 2 (251 aa).

This sequence belongs to the PCNA family. In terms of assembly, heterotrimer. The subunits circularize to form a toroid; DNA passes through its center. Replication factor C (RFC) is required to load the toroid on the DNA.

Sliding clamp subunit that acts as a moving platform for DNA processing. Responsible for tethering the catalytic subunit of DNA polymerase and other proteins to DNA during high-speed replication. In Aeropyrum pernix (strain ATCC 700893 / DSM 11879 / JCM 9820 / NBRC 100138 / K1), this protein is DNA polymerase sliding clamp 2.